The chain runs to 447 residues: Interferon-induced protein 44-like (447 aa).

Positions 1-159 (MKVTARLTWI…PVECEIFRVD (159 aa)) constitute a TLDc domain.

Belongs to the IFI44 family. As to quaternary structure, HA-28 antigen forms a complex with Kb MHC in BALB.B donor cells. Interacts with FKBP5; this interaction modulates IKBKB and IKBKE kinase activities. In terms of tissue distribution, expressed on cells of the hematopoietic lineage. Detected in transformed cell lines of the macrophage and B-cell lineage. Expressed in spleen and bone marrow.

It is found in the cytoplasm. Functionally, type I interferon-stimulated gene (ISG) that plays a critical role in antiviral and antibacterial activity. During bacterial infection, promotes macrophage differentiation and facilitates inflammatory cytokine secretion. Plays a role in the control of respiratory syncycial virus/RSV infection, reducing the ability of the virus to replicate. Acts as a feedback regulator of IFN responses by negatively regulating IKBKB kinase activity through interaction with FKBP5. Its function is as follows. Precursor of the histocompatibility antigen HA-28 in BALB.B mice. More generally, minor histocompatibility antigens refer to immunogenic peptide which, when complexed with MHC, can generate an immune response after recognition by specific T-cells. The peptides are derived from polymorphic intracellular proteins, which are cleaved by normal pathways of antigen processing. The binding of these peptides to MHC molecules and its expression on the cell surface can stimulate T-cell responses and thereby trigger graft rejection or graft-versus-host disease (GVHD). More specifically, HA-28 minor antigen is transcribed in the BALB.B donor but not in host C57BL/6 cells. HA-28 is presented to the donor BALB.B cell surface by Kb MHC. This complex HA-28/Kb MHC elicits cytotoxic T-cell response in C57BL/6 mice immunized with BALB.B spleen cells. It induces C57BL/6 mice cells recognition and lysis by CD8 T-cell from BALB.B mice. The sequence is that of Interferon-induced protein 44-like (Ifi44l) from Mus musculus (Mouse).